Here is a 525-residue protein sequence, read N- to C-terminus: Putative ankyrin repeat protein FPV228 (525 aa).

ANK repeat units follow at residues 39 to 71 (HPDN…TRDI), 72 to 122 (LGNT…ACNN), 123 to 152 (LNQT…KVNI), 156 to 185 (YGNT…DVNI), 190 to 226 (YWYS…TRCR), 227 to 254 (LNTT…DINA), 258 to 287 (NDNA…DVNM), 291 to 320 (RGKT…NPNI), and 324 to 353 (IMNT…DINH).

The polypeptide is Putative ankyrin repeat protein FPV228 (Fowlpox virus (strain NVSL) (FPV)).